The following is a 233-amino-acid chain: Mediator of RNA polymerase II transcription subunit 7 (233 aa).

Lys185 participates in a covalent cross-link: Glycyl lysine isopeptide (Lys-Gly) (interchain with G-Cter in SUMO1); alternate. Lys185 participates in a covalent cross-link: Glycyl lysine isopeptide (Lys-Gly) (interchain with G-Cter in SUMO2); alternate. Residues 188 to 213 (PMDADDSNNCTGQSDQQRENSGHRRD) are disordered. At Ser194 the chain carries Phosphoserine. A compositionally biased stretch (basic and acidic residues) spans 203–213 (QQRENSGHRRD).

It belongs to the Mediator complex subunit 7 family. In terms of assembly, component of the Mediator complex, which is composed of MED1, MED4, MED6, MED7, MED8, MED9, MED10, MED11, MED12, MED13, MED13L, MED14, MED15, MED16, MED17, MED18, MED19, MED20, MED21, MED22, MED23, MED24, MED25, MED26, MED27, MED29, MED30, MED31, CCNC, CDK8 and CDC2L6/CDK11. The MED12, MED13, CCNC and CDK8 subunits form a distinct module termed the CDK8 module. Mediator containing the CDK8 module is less active than Mediator lacking this module in supporting transcriptional activation. Individual preparations of the Mediator complex lacking one or more distinct subunits have been variously termed ARC, CRSP, DRIP, PC2, SMCC and TRAP.

It is found in the nucleus. Its function is as follows. Component of the Mediator complex, a coactivator involved in the regulated transcription of nearly all RNA polymerase II-dependent genes. Mediator functions as a bridge to convey information from gene-specific regulatory proteins to the basal RNA polymerase II transcription machinery. Mediator is recruited to promoters by direct interactions with regulatory proteins and serves as a scaffold for the assembly of a functional preinitiation complex with RNA polymerase II and the general transcription factors. This chain is Mediator of RNA polymerase II transcription subunit 7 (MED7), found in Sus scrofa (Pig).